A 599-amino-acid polypeptide reads, in one-letter code: Sulfite reductase [NADPH] flavoprotein alpha-component (599 aa).

The Flavodoxin-like domain maps to 64-202 (ITIISASQTG…AASEWRARVV (139 aa)). Residues 70–75 (SQTGNA), 117–120 (STQG), and 153–162 (LGDSSYEFFC) each bind FMN. Positions 234-448 (DAPLAASLSV…IEHNDNFRLP (215 aa)) constitute an FAD-binding FR-type domain. FAD contacts are provided by residues threonine 322, alanine 356, 386 to 389 (RLYS), 404 to 406 (TVG), tyrosine 410, and 419 to 422 (GGAS). Residues 519-520 (SR), 525-529 (KIYVQ), and aspartate 561 each bind NADP(+). Tyrosine 599 is a binding site for FAD.

Belongs to the NADPH-dependent sulphite reductase flavoprotein subunit CysJ family. The protein in the N-terminal section; belongs to the flavodoxin family. It in the C-terminal section; belongs to the flavoprotein pyridine nucleotide cytochrome reductase family. As to quaternary structure, alpha(8)-beta(8). The alpha component is a flavoprotein, the beta component is a hemoprotein. Requires FAD as cofactor. FMN is required as a cofactor.

The catalysed reaction is hydrogen sulfide + 3 NADP(+) + 3 H2O = sulfite + 3 NADPH + 4 H(+). It functions in the pathway sulfur metabolism; hydrogen sulfide biosynthesis; hydrogen sulfide from sulfite (NADPH route): step 1/1. Functionally, component of the sulfite reductase complex that catalyzes the 6-electron reduction of sulfite to sulfide. This is one of several activities required for the biosynthesis of L-cysteine from sulfate. The flavoprotein component catalyzes the electron flow from NADPH -&gt; FAD -&gt; FMN to the hemoprotein component. The polypeptide is Sulfite reductase [NADPH] flavoprotein alpha-component (Escherichia coli O6:H1 (strain CFT073 / ATCC 700928 / UPEC)).